Consider the following 315-residue polypeptide: Lipoyl synthase (315 aa).

Cys62, Cys67, Cys73, Cys88, Cys92, Cys95, and Ser302 together coordinate [4Fe-4S] cluster. The region spanning 74–292 (FNHGTATFMI…KIALKLGFIR (219 aa)) is the Radical SAM core domain.

Belongs to the radical SAM superfamily. Lipoyl synthase family. [4Fe-4S] cluster is required as a cofactor.

The protein localises to the cytoplasm. It catalyses the reaction [[Fe-S] cluster scaffold protein carrying a second [4Fe-4S](2+) cluster] + N(6)-octanoyl-L-lysyl-[protein] + 2 oxidized [2Fe-2S]-[ferredoxin] + 2 S-adenosyl-L-methionine + 4 H(+) = [[Fe-S] cluster scaffold protein] + N(6)-[(R)-dihydrolipoyl]-L-lysyl-[protein] + 4 Fe(3+) + 2 hydrogen sulfide + 2 5'-deoxyadenosine + 2 L-methionine + 2 reduced [2Fe-2S]-[ferredoxin]. It functions in the pathway protein modification; protein lipoylation via endogenous pathway; protein N(6)-(lipoyl)lysine from octanoyl-[acyl-carrier-protein]: step 2/2. Catalyzes the radical-mediated insertion of two sulfur atoms into the C-6 and C-8 positions of the octanoyl moiety bound to the lipoyl domains of lipoate-dependent enzymes, thereby converting the octanoylated domains into lipoylated derivatives. The chain is Lipoyl synthase from Vesicomyosocius okutanii subsp. Calyptogena okutanii (strain HA).